Consider the following 104-residue polypeptide: N(4)-acetylcytidine amidohydrolase (104 aa).

One can recognise an ASCH domain in the interval 6-102 (TFYTRFQQDI…ELYVIAFKKV (97 aa)). Lysine 20 (proton acceptor) is an active-site residue. Threonine 23 acts as the Nucleophile in catalysis. The active-site Proton donor is glutamate 73.

It belongs to the N(4)-acetylcytidine amidohydrolase family.

The enzyme catalyses N(4)-acetylcytidine + H2O = cytidine + acetate + H(+). It carries out the reaction N(4)-acetyl-2'-deoxycytidine + H2O = 2'-deoxycytidine + acetate + H(+). The catalysed reaction is N(4)-acetylcytosine + H2O = cytosine + acetate + H(+). Its function is as follows. Catalyzes the hydrolysis of N(4)-acetylcytidine (ac4C). This Cronobacter sakazakii (strain ATCC BAA-894) (Enterobacter sakazakii) protein is N(4)-acetylcytidine amidohydrolase.